The following is a 296-amino-acid chain: MECALDAQSLISLSLRKIHSSRTQRGGIKLHKNLLVSYVLRNARQLYLSERYAELYRRQPFPQPMEECGACDEPDIPELSPLQIPEEGEDEMHQLPRIQNGAELLEPLSSEEPLELPPCAHSPHPAKDPHSGFYSPAPSRGFCSSGDSGGLGLPQCSHTTVLDLDTHVVTTVESGYLHQDCPCQGAPRPALLTAPPKRKYAPAGYSYSGHGVAEEEEDVEPHFVPCKRGRYEDFCPQPLGEPTDSNNISNLISIFGSGFSGLMSRQSEAEQSLNGHLCGKQALASLGAWTRAIVAF.

This sequence belongs to the IER family.

The sequence is that of Immediate early response gene 5-like protein (ier5l) from Xenopus tropicalis (Western clawed frog).